The sequence spans 220 residues: Riboflavin kinase (220 aa).

An H-T-H motif-like region spans residues 1 to 92 (METDDQYYRA…LSRILAIKNN (92 aa)). The riboflavin kinase stretch occupies residues 93–220 (VVITGTVTSG…GDRVSVEVYT (128 aa)). 102 to 107 (GMGEGR) serves as a coordination point for CDP. Residues Thr-131 and Asn-133 each coordinate Mg(2+). The FMN site is built by Thr-188 and Glu-195. 200–203 (KYLR) contacts CDP.

This sequence belongs to the archaeal riboflavin kinase family. The cofactor is Mg(2+).

The enzyme catalyses riboflavin + CTP = CDP + FMN + H(+). Its pathway is cofactor biosynthesis; FMN biosynthesis; FMN from riboflavin (CTP route): step 1/1. Functionally, catalyzes the CTP-dependent phosphorylation of riboflavin (vitamin B2) to form flavin mononucleotide (FMN). The sequence is that of Riboflavin kinase (ribK) from Thermoplasma acidophilum (strain ATCC 25905 / DSM 1728 / JCM 9062 / NBRC 15155 / AMRC-C165).